A 247-amino-acid chain; its full sequence is 3-deoxy-manno-octulosonate cytidylyltransferase (247 aa).

This sequence belongs to the KdsB family.

Its subcellular location is the cytoplasm. It carries out the reaction 3-deoxy-alpha-D-manno-oct-2-ulosonate + CTP = CMP-3-deoxy-beta-D-manno-octulosonate + diphosphate. The protein operates within nucleotide-sugar biosynthesis; CMP-3-deoxy-D-manno-octulosonate biosynthesis; CMP-3-deoxy-D-manno-octulosonate from 3-deoxy-D-manno-octulosonate and CTP: step 1/1. It participates in bacterial outer membrane biogenesis; lipopolysaccharide biosynthesis. Its function is as follows. Activates KDO (a required 8-carbon sugar) for incorporation into bacterial lipopolysaccharide in Gram-negative bacteria. The polypeptide is 3-deoxy-manno-octulosonate cytidylyltransferase (Methylorubrum extorquens (strain CM4 / NCIMB 13688) (Methylobacterium extorquens)).